A 1198-amino-acid polypeptide reads, in one-letter code: DNA polymerase (1198 aa).

3 disordered regions span residues 1 to 90 (MALV…TVVA), 179 to 198 (LEQPDGQGQAAEVEDHQPNP), and 906 to 931 (ALADSDAEESEDERAPTPFYSPPSGT). Over residues 30–40 (QQPPRAAPAPA) the composition is skewed to low complexity.

The protein belongs to the DNA polymerase type-B family. In terms of assembly, heterodimer with the terminal protein; this heterodimer binds to bp 9 to 18 of the genome. Forms a complex with viral pTP, DBP and hosts NFIA and POU2F1/OCT1 for initiation of replication.

Its subcellular location is the host nucleus. The enzyme catalyses DNA(n) + a 2'-deoxyribonucleoside 5'-triphosphate = DNA(n+1) + diphosphate. Eukaryotic-type DNA polymerase involved in viral genomic replication. DNA synthesis is protein primed, and acts in a strand displacement replication. Assembles in complex with viral pTP, DBP, host NFIA and host POU2F1/OCT1 on viral origin of replication. The polymerase covalently transfers dCMP onto pTP, thereby initiating complementary strand synthesis. The chain is DNA polymerase from Homo sapiens (Human).